The chain runs to 127 residues: Aspartate 1-decarboxylase (127 aa).

The active-site Schiff-base intermediate with substrate; via pyruvic acid is serine 25. Serine 25 is modified (pyruvic acid (Ser)). Threonine 57 lines the substrate pocket. The active-site Proton donor is tyrosine 58. 73 to 75 is a substrate binding site; it reads GAA.

It belongs to the PanD family. Heterooctamer of four alpha and four beta subunits. Requires pyruvate as cofactor. Is synthesized initially as an inactive proenzyme, which is activated by self-cleavage at a specific serine bond to produce a beta-subunit with a hydroxyl group at its C-terminus and an alpha-subunit with a pyruvoyl group at its N-terminus.

The protein localises to the cytoplasm. It carries out the reaction L-aspartate + H(+) = beta-alanine + CO2. It functions in the pathway cofactor biosynthesis; (R)-pantothenate biosynthesis; beta-alanine from L-aspartate: step 1/1. In terms of biological role, catalyzes the pyruvoyl-dependent decarboxylation of aspartate to produce beta-alanine. In Listeria monocytogenes serovar 1/2a (strain ATCC BAA-679 / EGD-e), this protein is Aspartate 1-decarboxylase.